The sequence spans 515 residues: 2,3-bisphosphoglycerate-independent phosphoglycerate mutase (515 aa).

Residues Asp14 and Ser63 each coordinate Mn(2+). The active site involves Ser63. Substrate-binding positions include His124, 154-155 (RD), Arg186, Arg192, 259-262 (RADR), and Lys334. The Mn(2+) site is built by Asp401, His405, Asp442, His443, and His460.

It belongs to the BPG-independent phosphoglycerate mutase family. It depends on Mg(2+) as a cofactor. Requires Mn(2+) as cofactor.

It carries out the reaction (2R)-2-phosphoglycerate = (2R)-3-phosphoglycerate. It participates in carbohydrate degradation; glycolysis; pyruvate from D-glyceraldehyde 3-phosphate: step 3/5. Its activity is regulated as follows. Activity is not affected by 2,3-bisphosphoglycerate. Functionally, catalyzes the interconversion of 2-phosphoglycerate and 3-phosphoglycerate. This is 2,3-bisphosphoglycerate-independent phosphoglycerate mutase from Onchocerca volvulus.